Here is a 190-residue protein sequence, read N- to C-terminus: Elongation factor P-like protein (190 aa).

This sequence belongs to the elongation factor P family.

This is Elongation factor P-like protein from Erwinia tasmaniensis (strain DSM 17950 / CFBP 7177 / CIP 109463 / NCPPB 4357 / Et1/99).